The sequence spans 211 residues: Claudin-13 (211 aa).

Residues 1–8 are Cytoplasmic-facing; it reads MVVSKQEA. The helical transmembrane segment at 9–29 threads the bilayer; that stretch reads ISFSVTSLGWVGAIVSCVLPV. At 30–80 the chain is on the extracellular side; that stretch reads WRVTFPDDETDPDATIWEGLWHICQVRENRWIQCTLYDTRILVAQDIKVSR. A helical transmembrane segment spans residues 81–101; it reads VFMVICTIGTWLGLLLCVLGD. Residues 102 to 118 lie on the Cytoplasmic side of the membrane; sequence WRINCFMNFTIEENLLK. The helical transmembrane segment at 119 to 139 threads the bilayer; that stretch reads VAGGMFLSVGLLMLVPLSWVT. Over 140-165 the chain is Extracellular; the sequence is HNIIHGFFNPLLGFSKKVQMGSSLSL. A helical membrane pass occupies residues 166-186; the sequence is AWTSSLLLLLGGILLCVNIPV. The Cytoplasmic segment spans residues 187-211; sequence CRDFPRCIETPSARPSGANNDTLDV.

Belongs to the claudin family.

The protein localises to the cell junction. Its subcellular location is the tight junction. It localises to the cell membrane. Functionally, plays a major role in tight junction-specific obliteration of the intercellular space, through calcium-independent cell-adhesion activity. This chain is Claudin-13 (Cldn13), found in Mus musculus (Mouse).